We begin with the raw amino-acid sequence, 483 residues long: Cytochrome P450 monooxygenase stcF (483 aa).

A heme-binding site is contributed by Cys424.

Belongs to the cytochrome P450 family. Heme is required as a cofactor.

The protein operates within mycotoxin biosynthesis; sterigmatocystin biosynthesis. In terms of biological role, cytochrome P450 monooxygenase; part of the gene cluster that mediates the biosynthesis of sterigmatocystin (ST), a polyketide-derived furanocoumarin which is part of the most toxic and carcinogenic compounds among the known mycotoxins. The first step in the biosynthesis of sterigmatocystin is the production of hexanoate by the fatty acid synthase (FAS) units stcJ and stcK. The polyketide backbone is assembled by the non-reducing polyketide synthase stcA by condensation of the starter hexanoyl-CoA and 7 malonyl-CoA extender units followed by cyclization and release of norsolorinic acid. Norsolorinic acid is the first stable intermediate in the biosynthesis of sterigmatocystin and is converted into averantin (AVN) by the ketoreductase stcE which reduces the hexanoate ketone to an alcohol. Averantin is then oxidized into 5'-hydroxyaverantin (HAVN) by the cytochrome P450 monooxygenase stcF. 5'-hydroxyaverantin is further converted to 5'-oxyaverantin (OAVN) by the 5'-hydroxyaverantin dehydrogenase stcG. The next step is the conversion of OAVN into averufin (AVF) which is catalyzed by a yet to be identified enzyme. The cytochrome P450 monooxygenase stcB and the flavin-binding monooxygenase stcW are both required for the conversion of averufin to 1-hydroxyversicolorone. The esterase stcI probably catalyzes the formation of versiconal hemiacetal acetate from 1-hydroxyversicolorone. The oxydoreductase stcN then probably catalyzes the biosynthetic step from versiconal to versicolorin B (VERB). The next step is performed by the versicolorin B desaturase stcL to produce versicolorin A (VERA). The ketoreductase stcU and the cytochrome P450 monooxygenase stcS are involved in the conversion of versicolorin A to demethylsterigmatocystin. The Baeyer-Villiger oxidas stcQ and the reductase stcR might be involved in the biosynthetic step from versicolorin A to demethylsterigmatocystin. The final step in the biosynthesis of sterigmatocystin is the methylation of demethylsterigmatocystin catalyzed by the methyltransferase stcP. The protein is Cytochrome P450 monooxygenase stcF of Emericella nidulans (strain FGSC A4 / ATCC 38163 / CBS 112.46 / NRRL 194 / M139) (Aspergillus nidulans).